The chain runs to 131 residues: Profilin-5 (131 aa).

Cys13 and Cys115 are disulfide-bonded. Positions 81 to 97 match the Involved in PIP2 interaction motif; that stretch reads AVIRGKKGAGGITVKKT. Thr111 carries the phosphothreonine modification.

Belongs to the profilin family. In terms of assembly, occurs in many kinds of cells as a complex with monomeric actin in a 1:1 ratio. In terms of processing, phosphorylated by MAP kinases.

It is found in the cytoplasm. The protein localises to the cytoskeleton. Its function is as follows. Binds to actin and affects the structure of the cytoskeleton. At high concentrations, profilin prevents the polymerization of actin, whereas it enhances it at low concentrations. The protein is Profilin-5 of Corylus avellana (European hazel).